Consider the following 306-residue polypeptide: 4-hydroxy-tetrahydrodipicolinate synthase (306 aa).

Threonine 46 is a pyruvate binding site. Residue tyrosine 134 is the Proton donor/acceptor of the active site. Lysine 162 acts as the Schiff-base intermediate with substrate in catalysis. A pyruvate-binding site is contributed by valine 204.

Belongs to the DapA family. Homotetramer; dimer of dimers.

It localises to the cytoplasm. It catalyses the reaction L-aspartate 4-semialdehyde + pyruvate = (2S,4S)-4-hydroxy-2,3,4,5-tetrahydrodipicolinate + H2O + H(+). Its pathway is amino-acid biosynthesis; L-lysine biosynthesis via DAP pathway; (S)-tetrahydrodipicolinate from L-aspartate: step 3/4. Functionally, catalyzes the condensation of (S)-aspartate-beta-semialdehyde [(S)-ASA] and pyruvate to 4-hydroxy-tetrahydrodipicolinate (HTPA). The protein is 4-hydroxy-tetrahydrodipicolinate synthase of Synechococcus sp. (strain JA-2-3B'a(2-13)) (Cyanobacteria bacterium Yellowstone B-Prime).